A 401-amino-acid chain; its full sequence is Calreticulin (401 aa).

Positions 1–18 (MRKELWLGLLLSSQAVLS) are cleaved as a signal peptide. The cysteines at positions 103 and 134 are disulfide-linked. Residues tyrosine 107, lysine 109, tyrosine 125, and aspartate 132 each contribute to the an alpha-D-glucoside site. Repeat copies occupy residues 187 to 198 (KESGTLEEDWEI), 206 to 217 (DPEDKKPADWVD), 223 to 234 (DPEDKKPEDWDK), 241 to 252 (DPDATQPDDWDE), 256 to 266 (GKWEAPMISNP), 270 to 280 (GEWKAKKIPNP), and 284 to 294 (GVWKPRDIPNP). The tract at residues 187–252 (KESGTLEEDW…DATQPDDWDE (66 aa)) is 4 X approximate repeats. Composition is skewed to basic and acidic residues over residues 199–214 (LKPK…KPAD) and 224–236 (PEDK…DKEP). Residues 199 to 263 (LKPKTIPDPE…EDGKWEAPMI (65 aa)) form a disordered region. A compositionally biased stretch (acidic residues) spans 246 to 256 (QPDDWDEEEDG). The 3 X approximate repeats stretch occupies residues 256–294 (GKWEAPMISNPKYKGEWKAKKIPNPAYKGVWKPRDIPNP). Aspartate 314 is a binding site for an alpha-D-glucoside. Residues 341–401 (DQTNGATKDA…EEEDDKKDEL (61 aa)) are disordered. The span at 348–381 (KDAEKKAFDSAEADKRKKEEDERKKQEEEEKKTA) shows a compositional bias: basic and acidic residues. The span at 382-401 (EEDEDDDDEEEEEDDKKDEL) shows a compositional bias: acidic residues. Residues 398-401 (KDEL) carry the Prevents secretion from ER motif.

It belongs to the calreticulin family.

The protein localises to the endoplasmic reticulum lumen. In terms of biological role, molecular calcium-binding chaperone promoting folding, oligomeric assembly and quality control in the ER via the calreticulin/calnexin cycle. This lectin may interact transiently with almost all of the monoglucosylated glycoproteins that are synthesized in the ER. This Euglena gracilis protein is Calreticulin.